The primary structure comprises 364 residues: Phosphoserine aminotransferase (364 aa).

An L-glutamate-binding site is contributed by arginine 42. Pyridoxal 5'-phosphate-binding positions include 76 to 77 (GR), tryptophan 102, threonine 156, aspartate 175, and glutamine 198. Lysine 199 is subject to N6-(pyridoxal phosphate)lysine. 240-241 (NT) contributes to the pyridoxal 5'-phosphate binding site.

Belongs to the class-V pyridoxal-phosphate-dependent aminotransferase family. SerC subfamily. In terms of assembly, homodimer. Requires pyridoxal 5'-phosphate as cofactor.

It is found in the cytoplasm. It catalyses the reaction O-phospho-L-serine + 2-oxoglutarate = 3-phosphooxypyruvate + L-glutamate. The enzyme catalyses 4-(phosphooxy)-L-threonine + 2-oxoglutarate = (R)-3-hydroxy-2-oxo-4-phosphooxybutanoate + L-glutamate. It participates in amino-acid biosynthesis; L-serine biosynthesis; L-serine from 3-phospho-D-glycerate: step 2/3. The protein operates within cofactor biosynthesis; pyridoxine 5'-phosphate biosynthesis; pyridoxine 5'-phosphate from D-erythrose 4-phosphate: step 3/5. Its function is as follows. Catalyzes the reversible conversion of 3-phosphohydroxypyruvate to phosphoserine and of 3-hydroxy-2-oxo-4-phosphonooxybutanoate to phosphohydroxythreonine. The sequence is that of Phosphoserine aminotransferase from Shewanella sediminis (strain HAW-EB3).